We begin with the raw amino-acid sequence, 250 residues long: UPF0524 protein C3orf70 (250 aa).

The tract at residues 201-250 is disordered; it reads ESCDEDTEEGAELSSEEDYSPESSWEPDECTLLSPSQSDLEVIETIETTV. The span at 202-229 shows a compositional bias: acidic residues; sequence SCDEDTEEGAELSSEEDYSPESSWEPDE.

This sequence belongs to the UPF0524 family.

In terms of biological role, may play a role in neuronal and neurobehavioral development. This chain is UPF0524 protein C3orf70 (C3orf70), found in Homo sapiens (Human).